Reading from the N-terminus, the 400-residue chain is Tyrosine--tRNA ligase 2 (400 aa).

The 'HIGH' region signature appears at 46–55 (PSAPDIHLGH). The 'KMSKS' region motif lies at 230–234 (KMSKS). Lys-233 is a binding site for ATP. One can recognise an S4 RNA-binding domain in the interval 339-399 (NNLIEAIVKI…GKKKIVKLLV (61 aa)).

This sequence belongs to the class-I aminoacyl-tRNA synthetase family. TyrS type 2 subfamily. In terms of assembly, homodimer.

The protein resides in the cytoplasm. The catalysed reaction is tRNA(Tyr) + L-tyrosine + ATP = L-tyrosyl-tRNA(Tyr) + AMP + diphosphate + H(+). Catalyzes the attachment of tyrosine to tRNA(Tyr) in a two-step reaction: tyrosine is first activated by ATP to form Tyr-AMP and then transferred to the acceptor end of tRNA(Tyr). The sequence is that of Tyrosine--tRNA ligase 2 from Clostridium acetobutylicum (strain ATCC 824 / DSM 792 / JCM 1419 / IAM 19013 / LMG 5710 / NBRC 13948 / NRRL B-527 / VKM B-1787 / 2291 / W).